The chain runs to 175 residues: MDWMPLVLAAEEAESRGFSLNLNLLETNIINIAIVFGLLIFLARGYFGRVLGERKSEIENGIREVENRGRQAEQELATARQNLSQAQVQAQQILASARTNAERVRAQVLDQAQIDIARVRETVDQDLRNEQQRILTQVRLKVVGDALARLRERLPGELDEATQRRLLDRSIQLLD.

Residues 22–42 (LNLLETNIINIAIVFGLLIFL) traverse the membrane as a helical segment.

It belongs to the ATPase B chain family. As to quaternary structure, F-type ATPases have 2 components, F(1) - the catalytic core - and F(0) - the membrane proton channel. F(1) has five subunits: alpha(3), beta(3), gamma(1), delta(1), epsilon(1). F(0) has four main subunits: a(1), b(1), b'(1) and c(10-14). The alpha and beta chains form an alternating ring which encloses part of the gamma chain. F(1) is attached to F(0) by a central stalk formed by the gamma and epsilon chains, while a peripheral stalk is formed by the delta, b and b' chains.

It is found in the cell inner membrane. Its function is as follows. F(1)F(0) ATP synthase produces ATP from ADP in the presence of a proton or sodium gradient. F-type ATPases consist of two structural domains, F(1) containing the extramembraneous catalytic core and F(0) containing the membrane proton channel, linked together by a central stalk and a peripheral stalk. During catalysis, ATP synthesis in the catalytic domain of F(1) is coupled via a rotary mechanism of the central stalk subunits to proton translocation. In terms of biological role, component of the F(0) channel, it forms part of the peripheral stalk, linking F(1) to F(0). This chain is ATP synthase subunit b, found in Gloeobacter violaceus (strain ATCC 29082 / PCC 7421).